We begin with the raw amino-acid sequence, 288 residues long: MKHYDFHPLVGVGLRTPHLDFFQQQRPELSWLEIHSENYFQPNAAERKYLHTLREQYQISCHGIGLSLGSVERVSQVHLAQLKALIDAIDPMFVSDHLSWSENGGHYFNDLLPLPYTEEALNVFTRNVLEVQDYLQREILIENPSSYVKFQHSTISEWEFLAEVQQRTSCRLLLDLNNVHVSAFNHGFDCNTYLSAIPADKVDEIHLAGFTIKQLDKGEIWIDTHSRPVSTEVWKLYQHWIEQYGPRHTLIEWDLDIPAPEVLLAEAEKASLLLSQITTPLSATRKAS.

Belongs to the UPF0276 family.

This is UPF0276 protein VP3015 from Vibrio parahaemolyticus serotype O3:K6 (strain RIMD 2210633).